The sequence spans 501 residues: UPF0371 protein CD630_08980 (501 aa).

The protein belongs to the UPF0371 family.

The sequence is that of UPF0371 protein CD630_08980 from Clostridioides difficile (strain 630) (Peptoclostridium difficile).